The primary structure comprises 288 residues: Nucleotide-binding protein ASA_0318 (288 aa).

8 to 15 (GRSGSGKT) serves as a coordination point for ATP. Position 56–59 (56–59 (DVRN)) interacts with GTP.

The protein belongs to the RapZ-like family.

In terms of biological role, displays ATPase and GTPase activities. In Aeromonas salmonicida (strain A449), this protein is Nucleotide-binding protein ASA_0318.